Here is a 664-residue protein sequence, read N- to C-terminus: Trifunctional UDP-glucose 4,6-dehydratase/UDP-4-keto-6-deoxy-D-glucose 3,5-epimerase/UDP-4-keto-L-rhamnose-reductase RHM3 (664 aa).

Residue 13 to 19 (GAAGFIA) coordinates NAD(+). Substrate is bound at residue T132. D133 (proton donor) is an active-site residue. Residues E134 and Y159 each act as proton acceptor in the active site. 386 to 392 (GKTGWLG) contacts NADP(+).

It in the N-terminal section; belongs to the NAD(P)-dependent epimerase/dehydratase family. dTDP-glucose dehydratase subfamily. The protein in the C-terminal section; belongs to the dTDP-4-dehydrorhamnose reductase family. NAD(+) serves as cofactor. NADP(+) is required as a cofactor. As to expression, expressed in roots, stems, seedlings, and siliques. Lower expression in inflorescence tips, and leaves.

It catalyses the reaction UDP-alpha-D-glucose = UDP-4-dehydro-6-deoxy-alpha-D-glucose + H2O. The protein operates within carbohydrate biosynthesis. Its function is as follows. Trifunctional enzyme involved in UDP-beta-L-rhamnose biosynthesis, a precursor of the primary cell wall components rhamnogalacturonan I (RG-I) and rhamnogalacturonan II (RG-II). Catalyzes the dehydration of UDP-glucose to form UDP-4-dehydro-6-deoxy-D-glucose followed by the epimerization of the C3' and C5' positions of UDP-4-dehydro-6-deoxy-D-glucose to form UDP-4-keto-beta-L-rhamnose and the reduction of UDP-4-keto-beta-L-rhamnose to yield UDP-beta-L-rhamnose. In Arabidopsis thaliana (Mouse-ear cress), this protein is Trifunctional UDP-glucose 4,6-dehydratase/UDP-4-keto-6-deoxy-D-glucose 3,5-epimerase/UDP-4-keto-L-rhamnose-reductase RHM3.